The primary structure comprises 93 residues: MGIMDLFKKKSSGNVAKDRLKLVLVSDRANCSSEMMEMMKRDIIEVISRYMDIDAEALDVKITETESDSNNGMVPALVANIPIRDMKHRPDPR.

The protein belongs to the MinE family.

Functionally, prevents the cell division inhibition by proteins MinC and MinD at internal division sites while permitting inhibition at polar sites. This ensures cell division at the proper site by restricting the formation of a division septum at the midpoint of the long axis of the cell. The sequence is that of Cell division topological specificity factor from Agathobacter rectalis (strain ATCC 33656 / DSM 3377 / JCM 17463 / KCTC 5835 / VPI 0990) (Eubacterium rectale).